A 231-amino-acid polypeptide reads, in one-letter code: Histone H1 (231 aa).

Positions 1 to 17 (MSDPAIEVAPVPVASPA) are enriched in low complexity. Disordered stretches follow at residues 1–44 (MSDP…PVSD) and 124–231 (TKKV…AKKA). Residues 38–112 (THPPVSDMIV…GASGSFKLPA (75 aa)) form the H15 domain. 3 stretches are compositionally biased toward basic residues: residues 145 to 171 (KVKK…KTTK), 178 to 213 (PTKK…KAKK), and 221 to 231 (KAAKKPSAKKA).

The protein belongs to the histone H1/H5 family.

It is found in the nucleus. The protein localises to the chromosome. Histones H1 are necessary for the condensation of nucleosome chains into higher-order structures. This chain is Histone H1, found in Chironomus thummi thummi (Midge).